The sequence spans 264 residues: Thiazole synthase (264 aa).

Lys-106 functions as the Schiff-base intermediate with DXP in the catalytic mechanism. Residues Gly-167, 193–194 (AG), and 215–216 (NT) contribute to the 1-deoxy-D-xylulose 5-phosphate site.

It belongs to the ThiG family. As to quaternary structure, homotetramer. Forms heterodimers with either ThiH or ThiS.

It localises to the cytoplasm. It catalyses the reaction [ThiS sulfur-carrier protein]-C-terminal-Gly-aminoethanethioate + 2-iminoacetate + 1-deoxy-D-xylulose 5-phosphate = [ThiS sulfur-carrier protein]-C-terminal Gly-Gly + 2-[(2R,5Z)-2-carboxy-4-methylthiazol-5(2H)-ylidene]ethyl phosphate + 2 H2O + H(+). It participates in cofactor biosynthesis; thiamine diphosphate biosynthesis. Its function is as follows. Catalyzes the rearrangement of 1-deoxy-D-xylulose 5-phosphate (DXP) to produce the thiazole phosphate moiety of thiamine. Sulfur is provided by the thiocarboxylate moiety of the carrier protein ThiS. In vitro, sulfur can be provided by H(2)S. The polypeptide is Thiazole synthase (Xylella fastidiosa (strain Temecula1 / ATCC 700964)).